A 45-amino-acid polypeptide reads, in one-letter code: Keratin-associated protein 22-2 (45 aa).

This sequence belongs to the KRTAP type 20 family. In terms of assembly, interacts with hair keratins.

Its function is as follows. In the hair cortex, hair keratin intermediate filaments are embedded in an interfilamentous matrix, consisting of hair keratin-associated proteins (KRTAP), which are essential for the formation of a rigid and resistant hair shaft through their extensive disulfide bond cross-linking with abundant cysteine residues of hair keratins. The matrix proteins include the high-sulfur and high-glycine-tyrosine keratins. This Homo sapiens (Human) protein is Keratin-associated protein 22-2 (KRTAP22-2).